The primary structure comprises 268 residues: Indole-3-glycerol phosphate synthase (268 aa).

Belongs to the TrpC family.

It carries out the reaction 1-(2-carboxyphenylamino)-1-deoxy-D-ribulose 5-phosphate + H(+) = (1S,2R)-1-C-(indol-3-yl)glycerol 3-phosphate + CO2 + H2O. It participates in amino-acid biosynthesis; L-tryptophan biosynthesis; L-tryptophan from chorismate: step 4/5. This is Indole-3-glycerol phosphate synthase from Micrococcus luteus (strain ATCC 4698 / DSM 20030 / JCM 1464 / CCM 169 / CCUG 5858 / IAM 1056 / NBRC 3333 / NCIMB 9278 / NCTC 2665 / VKM Ac-2230) (Micrococcus lysodeikticus).